Here is a 417-residue protein sequence, read N- to C-terminus: Synaptic vesicle membrane protein VAT-1 homolog-like (417 aa).

2 disordered regions span residues 1–33 (MAKE…GSHR) and 382–417 (PTPL…PFIQ). Ser390 is subject to Phosphoserine. Phosphothreonine is present on residues Thr391 and Thr393. At Ser394 the chain carries Phosphoserine. Residues 395–405 (EAGEEEEDHEG) are compositionally biased toward acidic residues. A compositionally biased stretch (basic and acidic residues) spans 406-417 (DSENKERMPFIQ).

The protein belongs to the zinc-containing alcohol dehydrogenase family. Quinone oxidoreductase subfamily.

The sequence is that of Synaptic vesicle membrane protein VAT-1 homolog-like (Vat1l) from Mus musculus (Mouse).